Consider the following 1137-residue polypeptide: Bone sialoprotein-binding protein (1137 aa).

The first 52 residues, 1–52, serve as a signal peptide directing secretion; it reads MINRDNKKAITKKGMISNRLNKFSIRKYTVGTASILVGTTLIFGLGNQEAKA. The tract at residues 53-601 is ligand binding A region; it reads AENTSTENAK…GDGTVKPEEK (549 aa). Disordered regions lie at residues 54 to 249 and 675 to 697; these read ENTS…TAPT and LPTK…VTVK. Over residues 61–75 the composition is skewed to basic and acidic residues; it reads AKQDEASASDNKEVV. Polar residues predominate over residues 77-89; it reads ETENNSTQKNDLT. The segment covering 92–106 has biased composition (basic and acidic residues); that stretch reads IKKETNTDSHQEAKE. Residues 109-126 are compositionally biased toward low complexity; that stretch reads TTSSTQQQQNNATTSTET. The span at 130–145 shows a compositional bias: basic and acidic residues; it reads NIEKENVKPSTDKTAT. Positions 158 to 207 are enriched in polar residues; the sequence is PNNTNNDVTTKPSTSEIQTTPTTPQESTNIENSQPQPTPSKVDNQVTDAT. The segment covering 216 to 241 has biased composition (basic and acidic residues); that stretch reads SKEELKNNPEKLKELVRNDSNTDRST. CNA-B domains are found at residues 602-714, 715-824, and 825-935; these read LYKI…YKEP, KYNL…YKTP, and KYSL…EEDT. The tract at residues 896 to 1112 is disordered; the sequence is TQTGTNTTED…TGSENNGSNN (217 aa). 2 stretches are compositionally biased toward acidic residues: residues 903–913 and 930–1076; these read TEDDKDADGGE and YFEE…DSDS. An LPXTG sorting signal motif is present at residues 1100–1104; that stretch reads LPETG. Residue Thr1103 is modified to Pentaglycyl murein peptidoglycan amidated threonine. A propeptide spans 1104-1137 (removed by sortase); the sequence is GSENNGSNNATLFGGLFAALGSLLLFGRRKKQNK.

It belongs to the serine-aspartate repeat-containing protein (SDr) family.

It is found in the secreted. It localises to the cell wall. In terms of biological role, specifically interacts with bone sialoprotein (BSP), a glycoprotein of bone and dentin extracellular matrix. Could contribute to staphylococcal osteomyelitis and arthritis. The sequence is that of Bone sialoprotein-binding protein (bbp) from Staphylococcus aureus (strain MRSA252).